Reading from the N-terminus, the 272-residue chain is Prohibitin 1 (272 aa).

An N-acetylalanine modification is found at alanine 2. Threonine 91 carries the post-translational modification Phosphothreonine. Lysine 128 and lysine 186 each carry N6-acetyllysine. Positions lysine 177–isoleucine 211 form a coiled coil. Position 202 is an N6-acetyllysine; alternate (lysine 202). Lysine 202 is subject to N6-succinyllysine; alternate. Tyrosine 249 is modified (phosphotyrosine).

This sequence belongs to the prohibitin family. In terms of assembly, the mitochondrial prohibitin complex consists of two subunits (PHB1 and PHB2), assembled into a membrane-associated ring-shaped supercomplex of approximately 1 mDa. Interacts with STOML2. Interacts with MAP1LC3B (membrane-bound form LC3-II); the interaction requires PHB2 and takes place upon Parkin-mediated mitochondrial damage. Interacts with STAT3 (unphosphorylated or phosphorylated at 'Ser-727'). Interacts with CLPB. Interacts with CD86 (via cytoplasmic domain); the interactions increases after priming with CD40.

It localises to the mitochondrion inner membrane. Its subcellular location is the nucleus. The protein resides in the cytoplasm. It is found in the cell membrane. In terms of biological role, protein with pleiotropic attributes mediated in a cell-compartment- and tissue-specific manner, which include the plasma membrane-associated cell signaling functions, mitochondrial chaperone, and transcriptional co-regulator of transcription factors in the nucleus. Plays a role in adipose tissue and glucose homeostasis in a sex-specific manner. Contributes to pulmonary vascular remodeling by accelerating proliferation of pulmonary arterial smooth muscle cells. Functionally, in the mitochondria, together with PHB2, forms large ring complexes (prohibitin complexes) in the inner mitochondrial membrane (IMM) and functions as a chaperone protein that stabilizes mitochondrial respiratory enzymes and maintains mitochondrial integrity in the IMM, which is required for mitochondrial morphogenesis, neuronal survival, and normal lifespan. The prohibitin complex, with DNAJC19, regulates cardiolipin remodeling and the protein turnover of OMA1 in a cardiolipin-binding manner. Regulates mitochondrial respiration activity playing a role in cellular aging. The prohibitin complex plays a role of mitophagy receptor involved in targeting mitochondria for autophagic degradation. Involved in mitochondrial-mediated antiviral innate immunity, activates RIG-I-mediated signal transduction and production of IFNB1 and proinflammatory cytokine IL6. In the nucleus, acts as a transcription coregulator, enhances promoter binding by TP53, a transcription factor it activates, but reduces the promoter binding by E2F1, a transcription factor it represses. Interacts with STAT3 to affect IL17 secretion in T-helper Th17 cells. Its function is as follows. In the plasma membrane, cooperates with CD86 to mediate CD86-signaling in B lymphocytes that regulates the level of IgG1 produced through the activation of distal signaling intermediates. Upon CD40 engagement, required to activate NF-kappa-B signaling pathway via phospholipase C and protein kinase C activation. This is Prohibitin 1 (PHB1) from Bos taurus (Bovine).